The primary structure comprises 435 residues: D-amino acid dehydrogenase (435 aa).

3 to 17 (VLILGSGVIGTTSAW) lines the FAD pocket.

It belongs to the DadA oxidoreductase family. It depends on FAD as a cofactor.

The catalysed reaction is a D-alpha-amino acid + A + H2O = a 2-oxocarboxylate + AH2 + NH4(+). Its pathway is amino-acid degradation; D-alanine degradation; NH(3) and pyruvate from D-alanine: step 1/1. Its function is as follows. Oxidative deamination of D-amino acids. This Xylella fastidiosa (strain M23) protein is D-amino acid dehydrogenase.